Reading from the N-terminus, the 358-residue chain is Src kinase-associated phosphoprotein 2 (358 aa).

A phosphoserine mark is found at serine 5 and serine 9. A homodimerization region spans residues proline 14–glutamine 64. The residue at position 75 (tyrosine 75) is a Phosphotyrosine. 2 positions are modified to phosphoserine: serine 87 and serine 90. One can recognise a PH domain in the interval phenylalanine 116–glutamine 219. 2 positions are modified to phosphotyrosine: tyrosine 151 and tyrosine 197. Serine 223 is subject to Phosphoserine. A disordered region spans residues glutamate 232–aspartate 292. Over residues isoleucine 255–threonine 270 the composition is skewed to acidic residues. The residue at position 260 (tyrosine 260) is a Phosphotyrosine; by FYN. A phosphoserine mark is found at serine 272, serine 282, and serine 285. Residues lysine 274–aspartate 292 show a composition bias toward basic and acidic residues. An SH3 domain is found at aspartate 296–aspartate 357.

The protein belongs to the SKAP family. As to quaternary structure, interacts with LAT, GRB2, PTK2B and PRAM1. Homodimer. Interacts with FYB1, which is required for SKAP2 protein stability. Interacts with PTPNS1. Part of a complex consisting of SKAP2, FYB1 and PTPNS1. Part of a complex consisting of SKAP2, FYB1 and PIRB. May interact with actin. May interact with FYN, HCK and LYN. Interacts with FASLG. Post-translationally, dephosphorylated on Tyr-75 by PTPN22. Phosphorylated by FYN on Tyr-260. In case of infection with Y.pseudotuberculosis, dephosphorylated by bacterial phosphatase yopH. As to expression, expressed in kidney, lung, liver, spleen, bone marrow and testis. Present in T-cells, B-cells, and all cells of the myelomonocytic lineage. Present in all brain regions, with highest levels in neurons from the Purkinje cell layer, hippocampal gyrus, cortex and substantia nigra (at protein level).

The protein localises to the cytoplasm. Its function is as follows. May be involved in B-cell and macrophage adhesion processes. In B-cells, may act by coupling the B-cell receptor (BCR) to integrin activation. May play a role in src signaling pathway. The polypeptide is Src kinase-associated phosphoprotein 2 (Skap2) (Mus musculus (Mouse)).